A 105-amino-acid polypeptide reads, in one-letter code: MFAVIKTGGKQYRVAANDVITIAKLEGEAGTAVTFGEVLLYADGEGATQVGAPTVSGISVAGEIVAQKRGPKIIAFKKRRRQNSRRKRGHRQDFTVVRVTGISAA.

Belongs to the bacterial ribosomal protein bL21 family. Part of the 50S ribosomal subunit. Contacts protein L20.

This protein binds to 23S rRNA in the presence of protein L20. This is Large ribosomal subunit protein bL21 from Methylobacterium nodulans (strain LMG 21967 / CNCM I-2342 / ORS 2060).